A 385-amino-acid polypeptide reads, in one-letter code: MHDSEIFKFKDMMMMSCTVQTLVLVPWFLVVFVLAGGEDSSETTAMFPAMFVFGDSLVDNGNNNHLNSLARSNYLPYGIDFAGNQPTGRFSNGKTIVDFIGELLGLPEIPAFMDTVDGGVDILHGVNYASAAGGILEETGRHLGERFSMGRQVENFEKTLMEISRSMRKESVKEYMAKSLVVVSLGNNDYINNYLKPRLFLSSSIYDPTSFADLLLSNFTTHLLELYGKGFRKFVIAGVGPLGCIPDQLAAQAALPGECVEAVNEMAELFNNRLVSLVDRLNSDNKTASEAIFVYGNTYGAAVDILTNPFNYGFEVTDRGCCGVGRNRGEITCLPLAVPCAFRDRHVFWDAFHPTQAFNLIIALRAFNGSKSDCYPINLSQLSRL.

A signal peptide spans 1-35 (MHDSEIFKFKDMMMMSCTVQTLVLVPWFLVVFVLA). Ser-56 (nucleophile) is an active-site residue. Asn-218 and Asn-285 each carry an N-linked (GlcNAc...) asparagine glycan. Catalysis depends on residues Asp-350 and His-353. N-linked (GlcNAc...) asparagine glycans are attached at residues Asn-368 and Asn-378.

It belongs to the 'GDSL' lipolytic enzyme family.

Its subcellular location is the secreted. The chain is GDSL esterase/lipase At5g08460 from Arabidopsis thaliana (Mouse-ear cress).